A 348-amino-acid chain; its full sequence is MATVLAIETSCDETAVAIVNNRNVCSSVVASQIALHKTYGGVVPEMASREHLITINACLEEALAQSNLSWSDIDGVAATMAPGLVGALMVGATTAKTLAIVHQKPFVGVHHLEGHIYATYLSDPTWEPPFLCLLVSGGHTSLIWVKDCGFYEQLGATRDDAAGEAFDKVARLLNLGYPGGPVIDRLAKTGNPQAFALPEGRVSLPEGGYHPYDSSFSGLKTAVLRLVQTLEKDDKNSLPVADLAASFQSTVARSLTKKSIACALDYGINSIAVGGGVAANSELRKQLQEAGINHNIKVHFPPLKWCTDNAAMIGCAAADHLNRGHTSSLSLNVNSRLSITDVMQLYEF.

Positions 111 and 115 each coordinate Fe cation. Substrate is bound by residues 134 to 138 (LVSGG), Asp167, Gly180, Asp184, and Asn280. Residue Asp308 coordinates Fe cation.

This sequence belongs to the KAE1 / TsaD family. Requires Fe(2+) as cofactor.

The protein localises to the cytoplasm. It catalyses the reaction L-threonylcarbamoyladenylate + adenosine(37) in tRNA = N(6)-L-threonylcarbamoyladenosine(37) in tRNA + AMP + H(+). In terms of biological role, required for the formation of a threonylcarbamoyl group on adenosine at position 37 (t(6)A37) in tRNAs that read codons beginning with adenine. Is involved in the transfer of the threonylcarbamoyl moiety of threonylcarbamoyl-AMP (TC-AMP) to the N6 group of A37, together with TsaE and TsaB. TsaD likely plays a direct catalytic role in this reaction. The chain is tRNA N6-adenosine threonylcarbamoyltransferase from Rippkaea orientalis (strain PCC 8801 / RF-1) (Cyanothece sp. (strain PCC 8801)).